A 396-amino-acid chain; its full sequence is Elongation factor Tu (396 aa).

In terms of domain architecture, tr-type G spans 10–205; the sequence is KSHANIGTIG…AVDEYIPTPE (196 aa). A G1 region spans residues 19–26; the sequence is GHVDHGKT. Position 19–26 (19–26) interacts with GTP; that stretch reads GHVDHGKT. Position 26 (Thr26) interacts with Mg(2+). The segment at 61–65 is G2; that stretch reads GITIS. Positions 82–85 are G3; sequence DCPG. GTP contacts are provided by residues 82 to 86 and 137 to 140; these read DCPGH and NKCD. Residues 137–140 form a G4 region; the sequence is NKCD. The segment at 175 to 177 is G5; sequence SAL.

The protein belongs to the TRAFAC class translation factor GTPase superfamily. Classic translation factor GTPase family. EF-Tu/EF-1A subfamily. In terms of assembly, monomer.

The protein resides in the cytoplasm. It catalyses the reaction GTP + H2O = GDP + phosphate + H(+). In terms of biological role, GTP hydrolase that promotes the GTP-dependent binding of aminoacyl-tRNA to the A-site of ribosomes during protein biosynthesis. This Bacillus pumilus (strain SAFR-032) protein is Elongation factor Tu.